Reading from the N-terminus, the 375-residue chain is Enoyl-[acyl-carrier-protein] reductase, mitochondrial (375 aa).

The N-terminal 37 residues, 1–37 (MAALMESVVGRALKFSSTANFRSIRRGETPTLCIKSF), are a transit peptide targeting the mitochondrion. Catalysis depends on Tyr96, which acts as the Proton donor. Residues Asn169, 195–198 (TSIV), 218–220 (RDR), 287–290 (YGGM), 312–314 (FWL), and Lys370 each bind NADP(+).

The protein belongs to the zinc-containing alcohol dehydrogenase family. Quinone oxidoreductase subfamily. As to quaternary structure, homodimer.

The protein localises to the mitochondrion. The enzyme catalyses a 2,3-saturated acyl-[ACP] + NADP(+) = a (2E)-enoyl-[ACP] + NADPH + H(+). Its function is as follows. Catalyzes the NADPH-dependent reduction of trans-2-enoyl thioesters in mitochondrial fatty acid synthesis (fatty acid synthesis type II). Fatty acid chain elongation in mitochondria uses acyl carrier protein (ACP) as an acyl group carrier, but the enzyme accepts both ACP and CoA thioesters as substrates in vitro. This is Enoyl-[acyl-carrier-protein] reductase, mitochondrial from Arabidopsis thaliana (Mouse-ear cress).